Here is a 308-residue protein sequence, read N- to C-terminus: Peroxisomal targeting signal 2 receptor (308 aa).

6 WD repeats span residues 57 to 88 (DVEDSLFGVRWSQNCENQVYACCGDGSLRLFD), 101 to 132 (EHKAEIVAIDTNTVDRRIVVTGSWDGTIKLWL), 145 to 176 (GSNSRILTVATHYSSPNLLGYTSSDGLCKFWD), 187 to 218 (EIPNQITCMNWSKSNHRMVYTADNNNLVYCYD), 231 to 262 (GHQLAVRSIKSSNSAHDLLATASYDMTSRIFD), and 274 to 306 (LHSEFVRDVDWSDFGDGSWIASVGWDESLYIWN).

It belongs to the WD repeat peroxin-7 family. In terms of assembly, interacts with PEX21.

It is found in the cytoplasm. It localises to the cytosol. Its subcellular location is the peroxisome matrix. In terms of biological role, receptor required for the peroxisomal import of proteins containing a C-terminal PTS2-type peroxisomal targeting signal, such as 3-oxoacyl-CoA thiolase. Specifically binds to cargo proteins containing a PTS2 peroxisomal targeting signal in the cytosol. Cargo protein-binding triggers interaction with PEX21 and formation of a ternary complex composed of PEX21 and PEX7 along with PTS2-containing cargo proteins, which is tranlocated into peroxisomes by passing through the PEX13-PEX14 docking complex. In Schizosaccharomyces pombe (strain 972 / ATCC 24843) (Fission yeast), this protein is Peroxisomal targeting signal 2 receptor (pex7).